The following is a 2604-amino-acid chain: Probable polyketide synthase 17 (2604 aa).

Positions 11-433 constitute a Ketosynthase family 3 (KS3) domain; sequence NDDIAIIGMG…GSNCHMILSE (423 aa). Residues Cys179, His316, and His356 each act as for beta-ketoacyl synthase activity in the active site. The acyl/malonyl transferases stretch occupies residues 631–664; that stretch reads GISPSIVVGHSFGEIPSALFSDVISLETAVKIVY. Ser641 acts as the For acyl/malonyl transferase activity in catalysis. The segment at 937 to 1057 is N-terminal hotdog fold; sequence NNLLGHDQFA…GRIGLFKHNP (121 aa). A PKS/mFAS DH domain is found at 937–1216; that stretch reads NNLLGHDQFA…CTSLIRLKKQ (280 aa). His968 serves as the catalytic Proton acceptor; for dehydratase activity. The tract at residues 1072 to 1216 is C-terminal hotdog fold; it reads SFTTLTKSEV…CTSLIRLKKQ (145 aa). Asp1132 serves as the catalytic Proton donor; for dehydratase activity. The segment at 1357 to 1407 is disordered; sequence GESEHFSPSNPSSPNDTPRNNSNNCSSKNNAASSDDADDDTNNEETINQLN. The segment covering 1363–1390 has biased composition (low complexity); that stretch reads SPSNPSSPNDTPRNNSNNCSSKNNAASS. The Carrier domain maps to 2507–2584; sequence GDSGSTQAKV…SIIQRISSKS (78 aa). Ser2544 carries the post-translational modification O-(pantetheine 4'-phosphoryl)serine. Low complexity predominate over residues 2581 to 2597; that stretch reads SSKSTSTSTPNPTNTSK. The tract at residues 2581–2604 is disordered; that stretch reads SSKSTSTSTPNPTNTSKQTATKKT.

It depends on pantetheine 4'-phosphate as a cofactor.

Probable polyketide synthase. In Dictyostelium discoideum (Social amoeba), this protein is Probable polyketide synthase 17 (pks17).